Reading from the N-terminus, the 347-residue chain is tRNA N6-adenosine threonylcarbamoyltransferase (347 aa).

Fe cation is bound by residues His-110 and His-114. Substrate contacts are provided by residues Val-133–Gly-137, Asp-168, Gly-181, Asp-185, and Asn-277. Residue Asp-305 coordinates Fe cation.

The protein belongs to the KAE1 / TsaD family. Fe(2+) serves as cofactor.

Its subcellular location is the cytoplasm. The catalysed reaction is L-threonylcarbamoyladenylate + adenosine(37) in tRNA = N(6)-L-threonylcarbamoyladenosine(37) in tRNA + AMP + H(+). In terms of biological role, required for the formation of a threonylcarbamoyl group on adenosine at position 37 (t(6)A37) in tRNAs that read codons beginning with adenine. Is involved in the transfer of the threonylcarbamoyl moiety of threonylcarbamoyl-AMP (TC-AMP) to the N6 group of A37, together with TsaE and TsaB. TsaD likely plays a direct catalytic role in this reaction. The protein is tRNA N6-adenosine threonylcarbamoyltransferase of Kineococcus radiotolerans (strain ATCC BAA-149 / DSM 14245 / SRS30216).